The sequence spans 60 residues: Bowman-Birk type proteinase inhibitor C1 (60 aa).

Cystine bridges form between C5-C21, C11-C19, C28-C35, and C32-C49.

The protein belongs to the Bowman-Birk serine protease inhibitor family. As to expression, expressed in bulb (at protein level).

Its function is as follows. Serine protease inhibitor. Strongly inhibits trypsin (Ki = 0.22 nM) and very weakly inhibits chymotrypsin (Ki = 1200 nM). Does not inhibit bacterial subtilisin. This is Bowman-Birk type proteinase inhibitor C1 from Hyacinthus orientalis (Common hyacinth).